The chain runs to 545 residues: Glucose-6-phosphate isomerase (545 aa).

Residue Glu-343 is the Proton donor of the active site. Catalysis depends on residues His-374 and Lys-513.

This sequence belongs to the GPI family.

The protein localises to the cytoplasm. The catalysed reaction is alpha-D-glucose 6-phosphate = beta-D-fructose 6-phosphate. It participates in carbohydrate biosynthesis; gluconeogenesis. The protein operates within carbohydrate degradation; glycolysis; D-glyceraldehyde 3-phosphate and glycerone phosphate from D-glucose: step 2/4. Catalyzes the reversible isomerization of glucose-6-phosphate to fructose-6-phosphate. The protein is Glucose-6-phosphate isomerase of Methylibium petroleiphilum (strain ATCC BAA-1232 / LMG 22953 / PM1).